Consider the following 227-residue polypeptide: UPF0173 metal-dependent hydrolase STK_14180 (227 aa).

It belongs to the UPF0173 family.

The polypeptide is UPF0173 metal-dependent hydrolase STK_14180 (Sulfurisphaera tokodaii (strain DSM 16993 / JCM 10545 / NBRC 100140 / 7) (Sulfolobus tokodaii)).